A 151-amino-acid polypeptide reads, in one-letter code: Neuroglobin (151 aa).

The Globin domain occupies 1-149; sequence MELPEPELIR…VVQAMSRGWG (149 aa). Heme b is bound by residues histidine 64 and histidine 96.

The protein belongs to the globin family. In terms of assembly, monomer. Homodimer and homotetramer; disulfide-linked. Mainly monomeric but also detected as part of homodimers and homotetramers. Interacts with 14-3-3 proteins; regulates the phosphorylation of NGB. Could interact (ferrous form) with G-alpha(i) proteins (GTP-bound form). Phosphorylated during hypoxia by ERK1/ERK2. Phosphorylation regulates the heme pocket hexacoordination preventing the association of His-64 with the heme metal center. Thereby, promotes the access of dioxygen and nitrite to the heme and stimulates the nitrite reductase activity. Phosphorylation during hypoxia is stabilized by 14-3-3 proteins.

The protein localises to the cytoplasm. Its subcellular location is the cytosol. The protein resides in the mitochondrion matrix. The enzyme catalyses Fe(III)-heme b-[protein] + nitric oxide + H2O = Fe(II)-heme b-[protein] + nitrite + 2 H(+). Its function is as follows. Monomeric globin with a bis-histidyl six-coordinate heme-iron atom through which it can bind dioxygen, carbon monoxide and nitric oxide. Could help transport oxygen and increase its availability to the metabolically active neuronal tissues, though its low quantity in tissues as well as its high affinity for dioxygen, which may limit its oxygen-releasing ability, argue against it. The ferrous/deoxygenated form exhibits a nitrite reductase activity and it could produce nitric oxide which in turn inhibits cellular respiration in response to hypoxia. In its ferrous/deoxygenated state, it may also exhibit GDI (Guanine nucleotide Dissociation Inhibitor) activity toward heterotrimeric G-alpha proteins, thereby regulating signal transduction to facilitate neuroprotective responses in the wake of hypoxia and associated oxidative stress. This is Neuroglobin from Bos taurus (Bovine).